A 77-amino-acid chain; its full sequence is MSLFDFFKTKGSAATATDRLKLILAKERTLNLPYMEEMRKEIIAVIQKYTKSSDIHFKTLDSNQSVETIEVEIILPK.

This sequence belongs to the MinE family.

Prevents the cell division inhibition by proteins MinC and MinD at internal division sites while permitting inhibition at polar sites. This ensures cell division at the proper site by restricting the formation of a division septum at the midpoint of the long axis of the cell. The chain is Cell division topological specificity factor from Helicobacter acinonychis (strain Sheeba).